Here is a 354-residue protein sequence, read N- to C-terminus: Alternative oxidase, mitochondrial (354 aa).

Residues 1–64 constitute a mitochondrion transit peptide; sequence MNSMSTTGPI…RFISSTPQSQ (64 aa). The chain crosses the membrane as a helical span at residues 153 to 173; it reads FVFLESVAGVPGMVGGMLRHL. Positions 157, 196, and 199 each coordinate Fe cation. The helical transmembrane segment at 215–235 threads the bilayer; it reads LMVLGAQGVFFNGFFLSYLIS. 3 residues coordinate Fe cation: Glu-247, Glu-302, and His-305. Positions 333–354 are disordered; it reads KPHPGKGIKHLKTTGWEREEVV. Residues 335-344 are compositionally biased toward basic residues; it reads HPGKGIKHLK.

It belongs to the alternative oxidase family. Fe cation is required as a cofactor.

It localises to the mitochondrion inner membrane. Its function is as follows. Catalyzes cyanide-resistant oxygen consumption. May increase respiration when the cytochrome respiratory pathway is restricted, or in response to low temperatures. The polypeptide is Alternative oxidase, mitochondrial (alxA) (Emericella nidulans (strain FGSC A4 / ATCC 38163 / CBS 112.46 / NRRL 194 / M139) (Aspergillus nidulans)).